Here is a 264-residue protein sequence, read N- to C-terminus: Nicotinamide N-methyltransferase (264 aa).

Positions 20, 25, 63, 69, 85, and 90 each coordinate S-adenosyl-L-methionine. Citrulline; alternate is present on arginine 132. Residues aspartate 142–valine 143 and threonine 163 each bind S-adenosyl-L-methionine. The nicotinamide site is built by aspartate 197 and serine 213.

It belongs to the class I-like SAM-binding methyltransferase superfamily. NNMT/PNMT/TEMT family. As to quaternary structure, monomer. Post-translationally, deiminated by PADI1 and PADI2.

It is found in the cytoplasm. It catalyses the reaction nicotinamide + S-adenosyl-L-methionine = 1-methylnicotinamide + S-adenosyl-L-homocysteine. It participates in cofactor metabolism. Its pathway is amino-acid degradation. In terms of biological role, catalyzes the N-methylation of nicotinamide using the universal methyl donor S-adenosyl-L-methionine to form N1-methylnicotinamide and S-adenosyl-L-homocysteine, a predominant nicotinamide/vitamin B3 clearance pathway. Plays a central role in regulating cellular methylation potential, by consuming S-adenosyl-L-methionine and limiting its availability for other methyltransferases. Actively mediates genome-wide epigenetic and transcriptional changes through hypomethylation of repressive chromatin marks, such as H3K27me3. In a developmental context, contributes to low levels of the repressive histone marks that characterize pluripotent embryonic stem cell pre-implantation state. Acts as a metabolic regulator primarily on white adipose tissue energy expenditure as well as hepatic gluconeogenesis and cholesterol biosynthesis. In white adipocytes, regulates polyamine flux by consuming S-adenosyl-L-methionine which provides for propylamine group in polyamine biosynthesis, whereas by consuming nicotinamide controls NAD(+) levels through the salvage pathway. Via its product N1-methylnicotinamide regulates protein acetylation in hepatocytes, by repressing the ubiquitination and increasing the stability of SIRT1 deacetylase. Can also N-methylate other pyridines structurally related to nicotinamide and play a role in xenobiotic detoxification. This chain is Nicotinamide N-methyltransferase (NNMT), found in Sus scrofa (Pig).